We begin with the raw amino-acid sequence, 372 residues long: Virion morphogenesis protein OPG132 (372 aa).

This sequence belongs to the orthopoxvirus OPG132 family.

It localises to the host cytoplasm. The protein resides in the virion. In terms of biological role, lipid-bound viral membrane assembly protein that plays an essential role in immature virion (IV) to mature virion (MV) transition. Functions in both crescent-shaped viral membranes formation and its enclosure to form immature virions. In addition, participates in targeting mature virion proteins to sites of virion assembly to ensure their correct localization. The sequence is that of Virion morphogenesis protein OPG132 (OPG132) from Monkeypox virus.